Reading from the N-terminus, the 347-residue chain is Uroporphyrinogen decarboxylase (347 aa).

Residues 23-27 (RQAGR), aspartate 73, tyrosine 150, threonine 205, and histidine 323 contribute to the substrate site.

Belongs to the uroporphyrinogen decarboxylase family. In terms of assembly, homodimer.

The protein localises to the cytoplasm. It catalyses the reaction uroporphyrinogen III + 4 H(+) = coproporphyrinogen III + 4 CO2. The protein operates within porphyrin-containing compound metabolism; protoporphyrin-IX biosynthesis; coproporphyrinogen-III from 5-aminolevulinate: step 4/4. In terms of biological role, catalyzes the decarboxylation of four acetate groups of uroporphyrinogen-III to yield coproporphyrinogen-III. The protein is Uroporphyrinogen decarboxylase of Ruthia magnifica subsp. Calyptogena magnifica.